Consider the following 285-residue polypeptide: Eukaryotic translation initiation factor 3 subunit F-2 (285 aa).

In terms of domain architecture, MPN spans 11 to 145; that stretch reads VYLKPLVFFQ…TRLYCAVEMG (135 aa).

It belongs to the eIF-3 subunit F family. As to quaternary structure, component of the eukaryotic translation initiation factor 3 (eIF-3) complex. The eIF-3 complex interacts with pix.

It is found in the cytoplasm. Functionally, component of the eukaryotic translation initiation factor 3 (eIF-3) complex, which is involved in protein synthesis of a specialized repertoire of mRNAs and, together with other initiation factors, stimulates binding of mRNA and methionyl-tRNAi to the 40S ribosome. The eIF-3 complex specifically targets and initiates translation of a subset of mRNAs involved in cell proliferation. The protein is Eukaryotic translation initiation factor 3 subunit F-2 of Drosophila melanogaster (Fruit fly).